Here is a 109-residue protein sequence, read N- to C-terminus: Ribonuclease P protein component (109 aa).

This sequence belongs to the RnpA family. In terms of assembly, consists of a catalytic RNA component (M1 or rnpB) and a protein subunit.

The enzyme catalyses Endonucleolytic cleavage of RNA, removing 5'-extranucleotides from tRNA precursor.. Its function is as follows. RNaseP catalyzes the removal of the 5'-leader sequence from pre-tRNA to produce the mature 5'-terminus. It can also cleave other RNA substrates such as 4.5S RNA. The protein component plays an auxiliary but essential role in vivo by binding to the 5'-leader sequence and broadening the substrate specificity of the ribozyme. This Streptococcus agalactiae serotype III (strain NEM316) protein is Ribonuclease P protein component.